The primary structure comprises 289 residues: Inorganic pyrophosphatase (289 aa).

An N-acetylserine modification is found at Ser2. The residue at position 57 (Lys57) is an N6-acetyllysine. Asp116, Asp121, and Asp153 together coordinate Mg(2+). Lys228 bears the N6-acetyllysine mark. A Phosphoserine modification is found at Ser250.

This sequence belongs to the PPase family. Homodimer. Requires Mg(2+) as cofactor.

It is found in the cytoplasm. The enzyme catalyses diphosphate + H2O = 2 phosphate + H(+). In Mus musculus (Mouse), this protein is Inorganic pyrophosphatase (Ppa1).